A 700-amino-acid polypeptide reads, in one-letter code: Ribonucleoside-diphosphate reductase subunit alpha (700 aa).

Residues threonine 153, 169–170 (SC), glycine 198, 380–384 (NLCSE), and 580–584 (PTGSI) contribute to the substrate site. Residues cysteine 170 and cysteine 409 are joined by a disulfide bond. Asparagine 380 functions as the Proton acceptor in the catalytic mechanism. Catalysis depends on cysteine 382, which acts as the Cysteine radical intermediate. The active-site Proton acceptor is glutamate 384.

This sequence belongs to the ribonucleoside diphosphate reductase large chain family. As to quaternary structure, tetramer of two alpha and two beta subunits.

It carries out the reaction a 2'-deoxyribonucleoside 5'-diphosphate + [thioredoxin]-disulfide + H2O = a ribonucleoside 5'-diphosphate + [thioredoxin]-dithiol. Its activity is regulated as follows. Under complex allosteric control mediated by deoxynucleoside triphosphates and ATP binding. The type of nucleotide bound at the specificity site determines substrate preference. It seems probable that ATP makes the enzyme reduce CDP and UDP, dGTP favors ADP reduction and dTTP favors GDP reduction. Provides the precursors necessary for DNA synthesis. Catalyzes the biosynthesis of deoxyribonucleotides from the corresponding ribonucleotides. This chain is Ribonucleoside-diphosphate reductase subunit alpha, found in Bacillus subtilis (strain 168).